The primary structure comprises 332 residues: Malate dehydrogenase (332 aa).

Position 15-21 (15-21) interacts with NAD(+); sequence GAAGHIG. Substrate contacts are provided by Arg-96 and Arg-102. Residues Asn-109 and 133-135 contribute to the NAD(+) site; that span reads VGN. Substrate-binding residues include Asn-135 and Arg-166. His-191 serves as the catalytic Proton acceptor.

This sequence belongs to the LDH/MDH superfamily. MDH type 2 family.

It carries out the reaction (S)-malate + NAD(+) = oxaloacetate + NADH + H(+). In terms of biological role, catalyzes the reversible oxidation of malate to oxaloacetate. This is Malate dehydrogenase from Mycolicibacterium vanbaalenii (strain DSM 7251 / JCM 13017 / BCRC 16820 / KCTC 9966 / NRRL B-24157 / PYR-1) (Mycobacterium vanbaalenii).